Consider the following 150-residue polypeptide: Large ribosomal subunit protein uL13 (150 aa).

Residues 127 to 150 (KGTEHPHSAQKPQPLQLNPSATAK) form a disordered region. Residues 136–150 (QKPQPLQLNPSATAK) are compositionally biased toward polar residues.

This sequence belongs to the universal ribosomal protein uL13 family. In terms of assembly, part of the 50S ribosomal subunit.

This protein is one of the early assembly proteins of the 50S ribosomal subunit, although it is not seen to bind rRNA by itself. It is important during the early stages of 50S assembly. The chain is Large ribosomal subunit protein uL13 from Synechococcus sp. (strain CC9902).